A 288-amino-acid polypeptide reads, in one-letter code: MESNADWGSRGGLPQAFLTPGISSFSEFLKGFAPEYLPSGRPLPGGLGSASAAGDIAPHGTTIVSIAFPGGVLLAGDRRATMGNFIAQRDIEKVFPADEFSAVGIAGSAGLAVEVVRLFQLELEHYEKIEGVTLSTDGKANRLATMIRGNLAMAMQGLAVVPLFAGYDEETGQGRIFSYDVTGGMYEEHDFYSVGSGSMFARGALKKLFRPDFTAEDAAVAAVQALYDAADDDSATGGPDLFRKIFPVVAVVTEDGYRRLPDEELSTLVESIMDARRVVPDGPRSPLR.

Residues 1–60 (MESNADWGSRGGLPQAFLTPGISSFSEFLKGFAPEYLPSGRPLPGGLGSASAAGDIAPHG) constitute a propeptide, removed in mature form; by autocatalysis. Threonine 61 functions as the Nucleophile in the catalytic mechanism.

Belongs to the peptidase T1B family. In terms of assembly, the 20S proteasome core is composed of 14 alpha and 14 beta subunits that assemble into four stacked heptameric rings, resulting in a barrel-shaped structure. The two inner rings, each composed of seven catalytic beta subunits, are sandwiched by two outer rings, each composed of seven alpha subunits. The catalytic chamber with the active sites is on the inside of the barrel. Has a gated structure, the ends of the cylinder being occluded by the N-termini of the alpha-subunits. Is capped by the proteasome-associated ATPase, ARC.

It is found in the cytoplasm. It carries out the reaction Cleavage of peptide bonds with very broad specificity.. It participates in protein degradation; proteasomal Pup-dependent pathway. Its activity is regulated as follows. The formation of the proteasomal ATPase ARC-20S proteasome complex, likely via the docking of the C-termini of ARC into the intersubunit pockets in the alpha-rings, may trigger opening of the gate for substrate entry. Interconversion between the open-gate and close-gate conformations leads to a dynamic regulation of the 20S proteasome proteolysis activity. In terms of biological role, component of the proteasome core, a large protease complex with broad specificity involved in protein degradation. The chain is Proteasome subunit beta from Catenulispora acidiphila (strain DSM 44928 / JCM 14897 / NBRC 102108 / NRRL B-24433 / ID139908).